A 263-amino-acid chain; its full sequence is H-2 class II histocompatibility antigen, A-U beta chain (263 aa).

The signal sequence occupies residues 1–27 (MALQIPSLLLLAAVVVLMVLSSPGTEG). The tract at residues 28-120 (GDSERHFVVQ…TEVPTSLRRL (93 aa)) is beta-1. Residues 28–224 (GDSERHFVVQ…RAQSESARSK (197 aa)) lie on the Extracellular side of the membrane. Cystine bridges form between C42-C104 and C143-C199. The N-linked (GlcNAc...) asparagine glycan is linked to N46. Residues 121–214 (EQPNVVISLS…SLKSPITVEW (94 aa)) are beta-2. The 89-residue stretch at 123-211 (PNVVISLSRT…EHPSLKSPIT (89 aa)) folds into the Ig-like C1-type domain. Residues 215 to 224 (RAQSESARSK) are connecting peptide. Residues 225–245 (MLSGIGGCVLGVIFLGLGLFI) form a helical membrane-spanning segment. Residues 246–263 (RHRSQKGPRGPPPAGLLQ) lie on the Cytoplasmic side of the membrane.

This sequence belongs to the MHC class II family.

It localises to the membrane. The polypeptide is H-2 class II histocompatibility antigen, A-U beta chain (Mus musculus (Mouse)).